A 538-amino-acid chain; its full sequence is MTDIGILPAPAIAYGALSPMLIMFGVAVVSVLVEAFVPRGHRLRTQLALATVGILGAFVAVVALSGSHQVVMNGAVAIDGPTLYLQGLILVASGLALVVMAQRRTVAAVPSAVGAGAGGGLDSFAAQASSVPGSEPERVLNRTGITQTEIFPLTLFAIAGMMLFPACNDLLTMFVALEVFSLPLYVMCALARRRRLLSQESALKYFLLGAFSSAFFLFGSAFVYGYAGTVELDAVARAVDADAGERSFLLLGVAMLSVGLLFKVGAVPFHFWVPDVYQGAPTPVTAFMAATTKIAAFGALLRVLYVALPGITTDWRPVLWGVAIATMLIGSIGAVTQTDVKRMLAYSAVAHTGFLLTGVAAANERGVSSTLFYLAAYGFSTVGAFIIAGLVRSGNADDGADGDYKDDDEVTDLRRWAGVGRRAPVLGIVFALFLLAFAGIPLTSGFVSKFAVFEAAAAGGAMPLVVVGVMCSAIAAYFYVRVIVVMFFADPVEDSGVLRIPGPAVTVSIAVSALITVLLGVAPQPLLDLVENLADFVT.

The next 14 membrane-spanning stretches (helical) occupy residues 12 to 32, 47 to 67, 81 to 101, 144 to 164, 170 to 190, 205 to 225, 248 to 268, 294 to 314, 317 to 337, 343 to 363, 371 to 391, 423 to 443, 472 to 492, and 502 to 522; these read IAYG…VSVL, LALA…LSGS, PTLY…VVMA, GITQ…MMLF, LLTM…MCAL, YFLL…FVYG, FLLL…GAVP, IAAF…ITTD, PVLW…AVTQ, MLAY…AAAN, LFYL…AGLV, APVL…IPLT, SAIA…ADPV, and GPAV…LGVA.

The protein belongs to the complex I subunit 2 family. In terms of assembly, NDH-1 is composed of 14 different subunits. Subunits NuoA, H, J, K, L, M, N constitute the membrane sector of the complex.

The protein resides in the cell membrane. It carries out the reaction a quinone + NADH + 5 H(+)(in) = a quinol + NAD(+) + 4 H(+)(out). Its function is as follows. NDH-1 shuttles electrons from NADH, via FMN and iron-sulfur (Fe-S) centers, to quinones in the respiratory chain. The immediate electron acceptor for the enzyme in this species is believed to be a menaquinone. Couples the redox reaction to proton translocation (for every two electrons transferred, four hydrogen ions are translocated across the cytoplasmic membrane), and thus conserves the redox energy in a proton gradient. This is NADH-quinone oxidoreductase subunit N from Mycobacteroides abscessus (strain ATCC 19977 / DSM 44196 / CCUG 20993 / CIP 104536 / JCM 13569 / NCTC 13031 / TMC 1543 / L948) (Mycobacterium abscessus).